A 392-amino-acid chain; its full sequence is INCREASED PETAL GROWTH ANISOTROPY 1-like protein 1 (392 aa).

A coiled-coil region spans residues 11 to 52 (LLRLVKELQAYLVRNDKLEKENHELRQEVARLRAQVSNLKSH). Composition is skewed to polar residues over residues 65-76 (QSSYDGSNTDGS) and 100-109 (PTIQGQSTAT). The disordered stretch occupies residues 65–128 (QSSYDGSNTD…SKRTLGKRSV (64 aa)). Positions 269–299 (KDSLTQALQRIQSLQDRLEESVNNTEKMRDS) form a coiled coil.

The protein belongs to the IPGA1 family.

Its subcellular location is the cytoplasm. It localises to the cytoskeleton. Functionally, microtubule-associated protein probably involved in the regulation of microtubule organization. The polypeptide is INCREASED PETAL GROWTH ANISOTROPY 1-like protein 1 (Arabidopsis thaliana (Mouse-ear cress)).